The chain runs to 427 residues: Tol-Pal system protein TolB (427 aa).

Positions Met-1–Ala-23 are cleaved as a signal peptide.

Belongs to the TolB family. The Tol-Pal system is composed of five core proteins: the inner membrane proteins TolA, TolQ and TolR, the periplasmic protein TolB and the outer membrane protein Pal. They form a network linking the inner and outer membranes and the peptidoglycan layer.

It is found in the periplasm. Functionally, part of the Tol-Pal system, which plays a role in outer membrane invagination during cell division and is important for maintaining outer membrane integrity. The protein is Tol-Pal system protein TolB of Haemophilus influenzae (strain PittGG).